Reading from the N-terminus, the 56-residue chain is MLYWSIVFFVVALVAGVLGFTGIAAATADIAQILFVIFLVLFVISIIAGGFRRNRL.

A run of 2 helical transmembrane segments spans residues 6 to 26 and 30 to 50; these read IVFF…IAAA and IAQI…IAGG.

Belongs to the UPF0391 family.

The protein resides in the cell membrane. The protein is UPF0391 membrane protein HCH_04387 of Hahella chejuensis (strain KCTC 2396).